Consider the following 282-residue polypeptide: 5'-adenylylsulfate reductase-like 2 (282 aa).

An N-terminal signal peptide occupies residues 1–19 (MRWWPALPLLLLAVAVAGA). The 140-residue stretch at 20-159 (GDAAPVCTRP…LAAFYNDVSG (140 aa)) folds into the Thioredoxin domain. Asn134 is a glycosylation site (N-linked (GlcNAc...) asparagine). A helical transmembrane segment spans residues 205 to 225 (AASFVILRLLYLFYPKITAFV).

The protein localises to the membrane. In Oryza sativa subsp. japonica (Rice), this protein is 5'-adenylylsulfate reductase-like 2 (APRL2).